We begin with the raw amino-acid sequence, 162 residues long: Caveolin-2 (162 aa).

Residues 1–86 (MGLETEKADV…FEISKYVMYK (86 aa)) are Cytoplasmic-facing. Phosphotyrosine is present on tyrosine 19. Residues serine 20 and serine 36 each carry the phosphoserine modification. Positions 87 to 107 (FLTVFLAIPLAFVAGILFATL) form an intramembrane region, helical. Residues 108–162 (SCLHIWIIMPFVKTCLMVLPSVQTIWKSVTDVIIAPLCTSVGRSFSSISLQLSHD) are Cytoplasmic-facing.

Belongs to the caveolin family. As to quaternary structure, homodimer. Caveolin-1 and -2 colocalize and form a stable hetero-oligomeric complex.

The protein resides in the golgi apparatus membrane. It is found in the cell membrane. Its subcellular location is the membrane. It localises to the caveola. Its function is as follows. May act as a scaffolding protein within caveolar membranes. Interacts directly with G-protein alpha subunits and can functionally regulate their activity. Caveolin-2 may function as an accessory protein in conjunction with caveolin-1. The polypeptide is Caveolin-2 (CAV2) (Microcebus murinus (Gray mouse lemur)).